A 988-amino-acid polypeptide reads, in one-letter code: Mediator of RNA polymerase II transcription subunit 24 (988 aa).

6 consecutive short sequence motifs (LXXLL motif) follow at residues 128-132, 341-345, 445-449, 555-559, 786-790, and 856-860; these read LNWLL, LTPLL, LDLLL, LVALL, LPSLL, and LMRLL.

Belongs to the Mediator complex subunit 24 family. As to quaternary structure, component of the Mediator complex.

The protein localises to the nucleus. Its function is as follows. Component of the Mediator complex, a coactivator involved in the regulated transcription of nearly all RNA polymerase II-dependent genes. Mediator functions as a bridge to convey information from gene-specific regulatory proteins to the basal RNA polymerase II transcription machinery. Mediator is recruited to promoters by direct interactions with regulatory proteins and serves as a scaffold for the assembly of a functional preinitiation complex with RNA polymerase II and the general transcription factors. The sequence is that of Mediator of RNA polymerase II transcription subunit 24 (med24) from Xenopus laevis (African clawed frog).